Here is a 123-residue protein sequence, read N- to C-terminus: Ribosome-binding factor A (123 aa).

It belongs to the RbfA family. In terms of assembly, monomer. Binds 30S ribosomal subunits, but not 50S ribosomal subunits or 70S ribosomes.

It localises to the cytoplasm. Functionally, one of several proteins that assist in the late maturation steps of the functional core of the 30S ribosomal subunit. Associates with free 30S ribosomal subunits (but not with 30S subunits that are part of 70S ribosomes or polysomes). Required for efficient processing of 16S rRNA. May interact with the 5'-terminal helix region of 16S rRNA. The polypeptide is Ribosome-binding factor A (Neisseria gonorrhoeae (strain NCCP11945)).